The sequence spans 135 residues: Small ribosomal subunit protein uS12 (135 aa).

The tract at residues 1–29 (MPTINQLVRKGREKVEKKSKAPALQGNPQ) is disordered. Aspartate 89 is modified (3-methylthioaspartic acid). The interval 106 to 135 (GVKDRKQSRSKYGAKRPKPGQAAATTGKKK) is disordered. Basic residues predominate over residues 113-123 (SRSKYGAKRPK).

This sequence belongs to the universal ribosomal protein uS12 family. In terms of assembly, part of the 30S ribosomal subunit. Contacts proteins S8 and S17. May interact with IF1 in the 30S initiation complex.

Functionally, with S4 and S5 plays an important role in translational accuracy. Interacts with and stabilizes bases of the 16S rRNA that are involved in tRNA selection in the A site and with the mRNA backbone. Located at the interface of the 30S and 50S subunits, it traverses the body of the 30S subunit contacting proteins on the other side and probably holding the rRNA structure together. The combined cluster of proteins S8, S12 and S17 appears to hold together the shoulder and platform of the 30S subunit. This is Small ribosomal subunit protein uS12 from Sulfurihydrogenibium sp. (strain YO3AOP1).